A 1368-amino-acid chain; its full sequence is DNA-directed RNA polymerase subunit beta (1368 aa).

The protein belongs to the RNA polymerase beta chain family. As to quaternary structure, the RNAP catalytic core consists of 2 alpha, 1 beta, 1 beta' and 1 omega subunit. When a sigma factor is associated with the core the holoenzyme is formed, which can initiate transcription.

It catalyses the reaction RNA(n) + a ribonucleoside 5'-triphosphate = RNA(n+1) + diphosphate. Functionally, DNA-dependent RNA polymerase catalyzes the transcription of DNA into RNA using the four ribonucleoside triphosphates as substrates. The protein is DNA-directed RNA polymerase subunit beta of Herminiimonas arsenicoxydans.